Consider the following 568-residue polypeptide: MTEAEVGAEDLDTLLDELDYLPGHFHLEMQLNFEPRSPAQLRARDLKLQREGLRQELELVATPQLPAVRHLLGTFSFYLEELGDAREHFLEVARKDPGNLNAWANLAHVYGQLGQEEEEEASAGRLASLMGLEGDPEDAGDPRLRAARCLAEQGYAHGFDVGCASPEERAQVLEAGIALYDKALGYGQQIPIEEKRSWYFTMATLFIRLDGIFLEMGSEEQKRLPAFNRTLALLGEVLKSSDSRHQALAWCYVGMLLERKDTFSTTPMGVHEYGYSGTEPLDCFGKAIEIAKNQPPILNRLAKIFHFLGKQDMAVGTCNMVLAVLTDPELNWQAYCTRAKVRIRAYVHDLERAKVGLGGLPDRNHLACAKADLEEVVKVCPSLRTYLDISQVYYYMGVDAMRELLAVDEAALNQALVFLAKAGELELGDTLPELQLLRGKCLRVQGEDANAAACFKRAVELDDEGSSHTEGFGCLLEALLAQWSQAQLSDGEVGYEVDVWLRHAQGKYPAARLRQELQRVWRGHTEEVLGLARALVAQGRPALVRLLFETMEHEGEDAGGSGKSRVSS.

TPR repeat units lie at residues 66-99, 101-133, 155-190, 203-237, 260-294, 296-328, and 432-465; these read PAVR…DPGN, NAWA…MGLE, YAHG…GQQI, ATLF…LGEV, KDTF…AKNQ, PILN…LTDP, and PELQ…DDEG.

The polypeptide is Tetratricopeptide repeat protein 22 (Ttc22) (Mus musculus (Mouse)).